The primary structure comprises 388 residues: Cell adhesion molecule 4 (388 aa).

Positions 1–20 (MGRARRFQWPLLLLWAAAAG) are cleaved as a signal peptide. Residues 21–119 (PGAGQEVQTE…DTHHQIATLT (99 aa)) enclose the Ig-like V-type domain. The Extracellular portion of the chain corresponds to 21–324 (PGAGQEVQTE…VEAQTSVPYA (304 aa)). N-linked (GlcNAc...) asparagine glycans are attached at residues Asn-31 and Asn-67. 3 cysteine pairs are disulfide-bonded: Cys-44-Cys-104, Cys-145-Cys-199, and Cys-245-Cys-291. Ig-like C2-type domains follow at residues 124–219 (PENP…YVLD) and 224–307 (PTAR…YVLV). A glycan (N-linked (GlcNAc...) asparagine) is linked at Asn-286. A helical transmembrane segment spans residues 325–345 (IVGGILALLVFLIICVLVGMV). The Cytoplasmic portion of the chain corresponds to 346 to 388 (WCSVRQKGSYLTHEASGLDEQGEAREAFLNGSDGHKRKEEFFI). At Ser-361 the chain carries Phosphoserine.

This sequence belongs to the nectin family. As to quaternary structure, monomer and homodimer. N-glycosylated. As to expression, expressed in brain, prostate, brain, kidney and some other organs.

The protein localises to the membrane. In terms of biological role, involved in the cell-cell adhesion. Has calcium- and magnesium-independent cell-cell adhesion activity. May have tumor-suppressor activity. This Homo sapiens (Human) protein is Cell adhesion molecule 4 (CADM4).